Reading from the N-terminus, the 427-residue chain is Glucose-6-phosphate isomerase (427 aa).

E277 acts as the Proton donor in catalysis. Catalysis depends on residues H298 and K414.

This sequence belongs to the GPI family.

It localises to the cytoplasm. The enzyme catalyses alpha-D-glucose 6-phosphate = beta-D-fructose 6-phosphate. Its pathway is carbohydrate biosynthesis; gluconeogenesis. It participates in carbohydrate degradation; glycolysis; D-glyceraldehyde 3-phosphate and glycerone phosphate from D-glucose: step 2/4. Its function is as follows. Catalyzes the reversible isomerization of glucose-6-phosphate to fructose-6-phosphate. This is Glucose-6-phosphate isomerase from Mycoplasma capricolum subsp. capricolum (strain California kid / ATCC 27343 / NCTC 10154).